The primary structure comprises 206 residues: Uridine kinase (206 aa).

9–16 (GGSGSGKT) contributes to the ATP binding site.

The protein belongs to the uridine kinase family. As to quaternary structure, monomer.

Its subcellular location is the cytoplasm. It carries out the reaction uridine + ATP = UMP + ADP + H(+). It catalyses the reaction cytidine + ATP = CMP + ADP + H(+). It participates in pyrimidine metabolism; CTP biosynthesis via salvage pathway; CTP from cytidine: step 1/3. It functions in the pathway pyrimidine metabolism; UMP biosynthesis via salvage pathway; UMP from uridine: step 1/1. This Borreliella burgdorferi (strain ATCC 35210 / DSM 4680 / CIP 102532 / B31) (Borrelia burgdorferi) protein is Uridine kinase (udk).